A 103-amino-acid chain; its full sequence is Small ribosomal subunit protein uS10 (103 aa).

It belongs to the universal ribosomal protein uS10 family. Part of the 30S ribosomal subunit.

In terms of biological role, involved in the binding of tRNA to the ribosomes. The chain is Small ribosomal subunit protein uS10 from Chlorobium chlorochromatii (strain CaD3).